The primary structure comprises 951 residues: Sodium/potassium exporting P-type ATPase 1 (951 aa).

The Cytoplasmic segment spans residues 1 to 57 (MMGANSTEWHGQSVEQVTELLGTDVERGLKESVVGQLQKQFGPNELKGQRGVNPWKV). The helical transmembrane segment at 58-78 (LLAQFTNGLTVILLIATVVSF) threads the bilayer. At 79–82 (AVQD) the chain is on the extracellular side. A helical membrane pass occupies residues 83–103 (HAEGGVLAFVIIFNASVGFVQ). Residues 104–247 (EYRAEKTMDA…TPMQKRLNRM (144 aa)) are Cytoplasmic-facing. A helical transmembrane segment spans residues 248 to 268 (AYILFGISLVLAVIVFAVNKF). At 269–273 (EFNTD) the chain is on the extracellular side. Residues 274–294 (IIIYAVSLGIAVIPEGLIAVI) traverse the membrane as a helical segment. The Cytoplasmic segment spans residues 295-717 (TIVMALGVRR…GRRIFSNIRK (423 aa)). Residue aspartate 330 is the 4-aspartylphosphate intermediate of the active site. Mg(2+) contacts are provided by aspartate 330 and threonine 332. ATP-binding residues include threonine 332, glutamate 414, lysine 467, arginine 511, threonine 575, glycine 576, aspartate 577, arginine 636, and lysine 642. Aspartate 661 is a Mg(2+) binding site. ATP is bound at residue asparagine 664. Residues 718–738 (FILHLVSTNVGEVIVLIIGLA) traverse the membrane as a helical segment. At 739–743 (FKDRN) the chain is on the extracellular side. Residues 744 to 764 (GVSVFPLAPVQILFMNMVTST) form a helical membrane-spanning segment. Over 765 to 799 (PPAMALGVEAASKDTMKVPPHTKGLFGKEVLADMM) the chain is Cytoplasmic. A helical transmembrane segment spans residues 800–820 (VYGIIMGSLILVDWVLVIYAF). At 821–840 (GDSQLGLECNSDRMLNECNT) the chain is on the extracellular side. A helical membrane pass occupies residues 841–861 (VFRARSTIMVALIWMLLLHAY). Over 862 to 885 (NCRHPRASLFTAEGGGASKLFSNR) the chain is Cytoplasmic. The helical transmembrane segment at 886 to 906 (LLVWSVLLGSLMPIPTVYIPT) threads the bilayer. The Extracellular segment spans residues 907 to 916 (LNTKIFKQET). A helical transmembrane segment spans residues 917 to 937 (ISWEWSIVVVSVVAFFFLSEL). Residues 938–951 (YKLIKRNVMTSRVI) lie on the Cytoplasmic side of the membrane.

This sequence belongs to the cation transport ATPase (P-type) (TC 3.A.3) family. Type IID subfamily. Mg(2+) is required as a cofactor. Post-translationally, the active site is phosphorylated in presence of sodium or potassium and in conditions of higher pH. Not phosphorylated in presence of calcium ions.

It localises to the cell membrane. It catalyses the reaction Na(+)(in) + ATP + H2O = Na(+)(out) + ADP + phosphate + H(+). It carries out the reaction K(+)(in) + ATP + H2O = K(+)(out) + ADP + phosphate + H(+). Its function is as follows. Catalyzes the hydrolysis of ATP coupled with the export of sodium and potassium from the cell. Appears to export potassium more efficiently than sodium. May transport other cations such as lithium. Sodium/potassium efflux ATPases are involved in salt tolerance and maintaining the membrane potential across the plasma membrane in high salinity (Na+) or alkaline (K+) environments. This chain is Sodium/potassium exporting P-type ATPase 1, found in Marchantia polymorpha (Common liverwort).